The primary structure comprises 107 residues: Nucleoid-associated protein mlr5504 (107 aa).

It belongs to the YbaB/EbfC family. Homodimer.

It localises to the cytoplasm. Its subcellular location is the nucleoid. Its function is as follows. Binds to DNA and alters its conformation. May be involved in regulation of gene expression, nucleoid organization and DNA protection. This is Nucleoid-associated protein mlr5504 from Mesorhizobium japonicum (strain LMG 29417 / CECT 9101 / MAFF 303099) (Mesorhizobium loti (strain MAFF 303099)).